A 137-amino-acid chain; its full sequence is Cofilin (137 aa).

Residues 5–135 (GVKVSPECLE…AYETVLEKVT (131 aa)) enclose the ADF-H domain.

The protein belongs to the actin-binding proteins ADF family.

Its subcellular location is the cytoplasm. The protein localises to the cytoskeleton. It localises to the nucleus matrix. In terms of biological role, controls reversibly actin polymerization and depolymerization in a pH-sensitive manner. It has the ability to bind G- and F-actin in a 1:1 ratio of cofilin to actin. Binding to F-actin is regulated by tropomyosin. It is the major component of intranuclear and cytoplasmic actin rods. Required for accumulation of actin at the cell division site via depolymerizing actin at the cell ends. In association with myosin II has a role in the assembly of the contractile ring via severing actin filaments. Involved in the maintenance of the contractile ring once formed. In association with profilin and capping protein, has a role in the mitotic reorganization of the actin cytoskeleton. Severs actin filaments (F-actin). This chain is Cofilin (cof1), found in Schizosaccharomyces pombe (strain 972 / ATCC 24843) (Fission yeast).